The primary structure comprises 150 residues: uncharacterized protein (150 aa).

To A.tumefaciens conjugal transfer protein TraB.

This is an uncharacterized protein from Agrobacterium tumefaciens (strain 15955).